The following is a 141-amino-acid chain: Sec-independent protein translocase protein TatB (141 aa).

Residues 2–22 (FANVGWGEMLVLVIAGLVILG) traverse the membrane as a helical segment. The disordered stretch occupies residues 92-141 (IFTGRFDSTSSDQPGSGKPPKPQSGPGPAAASGPAATTTPASTPFDPDAT). Over residues 117–141 (PGPAAASGPAATTTPASTPFDPDAT) the composition is skewed to low complexity.

It belongs to the TatB family. The Tat system comprises two distinct complexes: a TatABC complex, containing multiple copies of TatA, TatB and TatC subunits, and a separate TatA complex, containing only TatA subunits. Substrates initially bind to the TatABC complex, which probably triggers association of the separate TatA complex to form the active translocon.

It is found in the cell membrane. Its function is as follows. Part of the twin-arginine translocation (Tat) system that transports large folded proteins containing a characteristic twin-arginine motif in their signal peptide across membranes. Together with TatC, TatB is part of a receptor directly interacting with Tat signal peptides. TatB may form an oligomeric binding site that transiently accommodates folded Tat precursor proteins before their translocation. This chain is Sec-independent protein translocase protein TatB, found in Mycolicibacterium gilvum (strain PYR-GCK) (Mycobacterium gilvum (strain PYR-GCK)).